We begin with the raw amino-acid sequence, 467 residues long: UDP-N-acetylmuramate--L-alanine ligase (467 aa).

123 to 129 (GTHGKST) contacts ATP.

This sequence belongs to the MurCDEF family.

Its subcellular location is the cytoplasm. The catalysed reaction is UDP-N-acetyl-alpha-D-muramate + L-alanine + ATP = UDP-N-acetyl-alpha-D-muramoyl-L-alanine + ADP + phosphate + H(+). It participates in cell wall biogenesis; peptidoglycan biosynthesis. Cell wall formation. This is UDP-N-acetylmuramate--L-alanine ligase from Arthrobacter sp. (strain FB24).